The sequence spans 279 residues: Dehydrogenase/reductase SDR family member 4 (279 aa).

37–61 contributes to the NADP(+) binding site; the sequence is LVTASTDGIGFAIARRLAEDGAHVV. Lys93 carries the N6-acetyllysine; alternate modification. Lys93 carries the post-translational modification N6-succinyllysine; alternate. An N6-acetyllysine modification is found at Lys106. A substrate-binding site is contributed by Ser170. The active-site Proton acceptor is Tyr183. Lys187 serves as a coordination point for NADP(+). Lys217 is modified (N6-acetyllysine; alternate). Lys217 is modified (N6-succinyllysine; alternate). Ser221 carries the phosphoserine modification. Lys228 and Lys235 each carry N6-succinyllysine. The Peroxisomal targeting signal signature appears at 277–279; sequence SRL.

The protein belongs to the short-chain dehydrogenases/reductases (SDR) family. As to quaternary structure, homotetramer.

Its subcellular location is the peroxisome. It catalyses the reaction a secondary alcohol + NADP(+) = a ketone + NADPH + H(+). The catalysed reaction is 3alpha-hydroxy-5beta-pregnan-20-one + NADP(+) = 5beta-pregnan-3,20-dione + NADPH + H(+). The enzyme catalyses 5beta-dihydrotestosterone + NADPH + H(+) = 5beta-androstane-3alpha,17beta-diol + NADP(+). It carries out the reaction all-trans-retinol + NADP(+) = all-trans-retinal + NADPH + H(+). It catalyses the reaction isatin + NADPH + H(+) = 3-hydroxyindolin-2-one + NADP(+). Its function is as follows. NADPH-dependent oxidoreductase which catalyzes the reduction of a variety of compounds bearing carbonyl groups including ketosteroids, alpha-dicarbonyl compounds, aldehydes, aromatic ketones and quinones. Reduces all-trans-retinal and 9-cis retinal. Reduces 3-ketosteroids and benzil into 3alpha-hydroxysteroids and S-benzoin, respectively, in contrast to the stereoselectivity of primates DHRS4s which produce 3beta-hydroxysteroids and R-benzoin. In the reverse reaction, catalyzes the NADP-dependent oxidation of 3alpha-hydroxysteroids and alcohol, but with much lower efficiency. Involved in the metabolism of 3alpha-hydroxysteroids, retinoid, isatin and xenobiotic carbonyl compounds. The polypeptide is Dehydrogenase/reductase SDR family member 4 (Mus musculus (Mouse)).